Reading from the N-terminus, the 420-residue chain is Glucose-1-phosphate adenylyltransferase (420 aa).

Alpha-D-glucose 1-phosphate contacts are provided by residues Tyr-107, Gly-173, 188 to 189, and Ser-206; that span reads EK.

It belongs to the bacterial/plant glucose-1-phosphate adenylyltransferase family. As to quaternary structure, homotetramer.

The enzyme catalyses alpha-D-glucose 1-phosphate + ATP + H(+) = ADP-alpha-D-glucose + diphosphate. It functions in the pathway glycan biosynthesis; glycogen biosynthesis. In terms of biological role, involved in the biosynthesis of ADP-glucose, a building block required for the elongation reactions to produce glycogen. Catalyzes the reaction between ATP and alpha-D-glucose 1-phosphate (G1P) to produce pyrophosphate and ADP-Glc. The sequence is that of Glucose-1-phosphate adenylyltransferase from Shewanella sp. (strain ANA-3).